A 279-amino-acid chain; its full sequence is uncharacterized protein (279 aa).

A run of 3 helical transmembrane segments spans residues 31–51 (GYIA…FHAT), 67–87 (LLSI…AKII), and 115–135 (EITG…SLAL).

It belongs to the transketolase family. Thiamine diphosphate is required as a cofactor.

It is found in the cell membrane. This is an uncharacterized protein from Sinorhizobium fredii (strain NBRC 101917 / NGR234).